Consider the following 1216-residue polypeptide: Probable cation-transporting ATPase 13A5 (1216 aa).

5 consecutive transmembrane segments (helical) span residues 33–53 (RALC…MFYW), 198–218 (LLVK…LTLW), 222–242 (GYIE…VLSV), 401–421 (FMVF…GVYM), and 433–453 (MALI…LTIG). Asp486 functions as the 4-aspartylphosphate intermediate in the catalytic mechanism. N-linked (GlcNAc...) asparagine glycosylation is found at Asn650 and Asn817. Residues Asp848 and Asp852 each coordinate Mg(2+). The next 6 helical transmembrane spans lie at 896–916 (ALVS…IQFI), 933–950 (YLLQ…TMSI), 971–991 (LLLS…CTFL), 1040–1060 (FEGT…AFIF), 1075–1095 (LFSL…FCDF), and 1113–1133 (VSIL…EDAV).

The protein belongs to the cation transport ATPase (P-type) (TC 3.A.3) family. Type V subfamily. In terms of tissue distribution, specifically expressed in brain and stomach.

The protein localises to the membrane. The enzyme catalyses ATP + H2O = ADP + phosphate + H(+). In Mus musculus (Mouse), this protein is Probable cation-transporting ATPase 13A5 (Atp13a5).